The sequence spans 523 residues: MSISLNTCILILKEHHLLKSSAVQDTVATKMDYVSYDSRDIQTNTLFFCKGAGFRPTYLSMAKSNGANCYVAEQPYPEGKGMHALIVRDVSKAMALLSAAFFRFPQDDLYVVAFTGTKGKTTSAYFLKGMLDQANGGRTALISSVNDVVGPKPEDSFKSSLTTPESLDLFRDMRTAVDNGMTHLVMEVSSQAYKKNRVFGLTYDLGFFLNISPDHIGPNEHPNFADYLHCKLQLMVNSRKCIINAETANFNEVYAAATTTTNPDSIYLFAREDFENPDLDVPIDFRFASQELDMKETRFKLFCATDKAKKLPINGDYTLKMLGDFNESNGTAAIIGAGLAGLNHDQCAKGIRNVTIPGRMQTERTKEHGMVVVDYAHNKASMMALMRFMQNEFNDPKIIVVVGAPGDKGVSRRPGFSESLSAYADKAFLTTDDPGFEDPKSIAEEIDAGIDHSKCDVTIELDRKKAIHDAIASAGPDDVVLICGKGADAFQKIRGVDTPYPSDIVVAQQVINELEGQDEHFRK.

Ser-38 contacts UDP-N-acetyl-alpha-D-muramoyl-L-alanyl-D-glutamate. Residue 116–122 (GTKGKTT) participates in ATP binding. UDP-N-acetyl-alpha-D-muramoyl-L-alanyl-D-glutamate-binding positions include 162 to 163 (TT), Ser-189, and Arg-197. N6-carboxylysine is present on Lys-231.

This sequence belongs to the MurCDEF family. MurE subfamily. In terms of processing, carboxylation is probably crucial for Mg(2+) binding and, consequently, for the gamma-phosphate positioning of ATP.

The protein resides in the cytoplasm. It functions in the pathway cell wall biogenesis; peptidoglycan biosynthesis. Catalyzes the addition of an amino acid to the nucleotide precursor UDP-N-acetylmuramoyl-L-alanyl-D-glutamate (UMAG) in the biosynthesis of bacterial cell-wall peptidoglycan. The sequence is that of UDP-N-acetylmuramyl-tripeptide synthetase from Lactobacillus acidophilus (strain ATCC 700396 / NCK56 / N2 / NCFM).